A 235-amino-acid polypeptide reads, in one-letter code: Ribonuclease 3 (235 aa).

Residues 6 to 135 enclose the RNase III domain; it reads LISLEKILGF…VIGAVYFDCG (130 aa). Glu48 contributes to the Mg(2+) binding site. Asp52 is a catalytic residue. Asn121 and Glu124 together coordinate Mg(2+). Glu124 is a catalytic residue. The DRBM domain occupies 162–231; it reads DEKTTLQELL…AKKALELLKN (70 aa).

This sequence belongs to the ribonuclease III family. In terms of assembly, homodimer. Mg(2+) serves as cofactor.

The protein localises to the cytoplasm. The catalysed reaction is Endonucleolytic cleavage to 5'-phosphomonoester.. Its function is as follows. Digests double-stranded RNA. Involved in the processing of primary rRNA transcript to yield the immediate precursors to the large and small rRNAs (23S and 16S). Processes some mRNAs, and tRNAs when they are encoded in the rRNA operon. Processes pre-crRNA and tracrRNA of type II CRISPR loci if present in the organism. This chain is Ribonuclease 3, found in Carboxydothermus hydrogenoformans (strain ATCC BAA-161 / DSM 6008 / Z-2901).